Consider the following 288-residue polypeptide: Small ribosomal subunit protein uS2 (288 aa).

A disordered region spans residues 255-288 (ANNRDHKNNKNNSTIDNAENLKEENLVGGSNNES).

This sequence belongs to the universal ribosomal protein uS2 family.

This chain is Small ribosomal subunit protein uS2, found in Ehrlichia chaffeensis (strain ATCC CRL-10679 / Arkansas).